The sequence spans 167 residues: Putative C-type lectin-like domain family 1 (167 aa).

The Cytoplasmic segment spans residues 1–67 (MVSNFFHVIQ…KYDCPFSGTS (67 aa)). A helical; Signal-anchor for type II membrane protein membrane pass occupies residues 68 to 88 (FVVFSLFLICAMAGDVVYADI). Residues 89–167 (KTVRTSPLEL…DITAMVRFNI (79 aa)) are Extracellular-facing. N-linked (GlcNAc...) asparagine glycosylation is found at N109, N140, and N149. Residues 116–167 (SCPAKDWKVHKGKCYWIAETKKSWNKSQNDCAINNSYLMVIQDITAMVRFNI) enclose the C-type lectin; atypical domain.

As to expression, expressed in spleen, lymph node, and tonsil. Lower expression in peripheral blood, bone marrow, and colon. No expression detected in thymus. Highly expressed in dendritic and B-cells.

It localises to the cell membrane. Functionally, may function in mediating immune cell-cell interactions. May act as a T-cell costimulatory molecule, enhancing anti-CD3-induced proliferation. May play a role in the interaction of dendritic cells with T-cells and the cells of the adaptive immune response. This is Putative C-type lectin-like domain family 1 from Homo sapiens (Human).